Consider the following 206-residue polypeptide: Octanoyltransferase (206 aa).

The BPL/LPL catalytic domain occupies 30–206; sequence PETNDEIWLV…EFVTLLNNSI (177 aa). Substrate is bound by residues 69–76, 137–139, and 150–152; these read RGGQVTYH, SLG, and GIA. The active-site Acyl-thioester intermediate is C168.

The protein belongs to the LipB family.

Its subcellular location is the cytoplasm. It catalyses the reaction octanoyl-[ACP] + L-lysyl-[protein] = N(6)-octanoyl-L-lysyl-[protein] + holo-[ACP] + H(+). Its pathway is protein modification; protein lipoylation via endogenous pathway; protein N(6)-(lipoyl)lysine from octanoyl-[acyl-carrier-protein]: step 1/2. Catalyzes the transfer of endogenously produced octanoic acid from octanoyl-acyl-carrier-protein onto the lipoyl domains of lipoate-dependent enzymes. Lipoyl-ACP can also act as a substrate although octanoyl-ACP is likely to be the physiological substrate. The polypeptide is Octanoyltransferase (Francisella tularensis subsp. tularensis (strain FSC 198)).